Here is a 79-residue protein sequence, read N- to C-terminus: Cyclin-dependent kinases regulatory subunit 2 (79 aa).

This sequence belongs to the CKS family. Forms a homohexamer that can probably bind six kinase subunits.

Its function is as follows. Binds to the catalytic subunit of the cyclin dependent kinases and is essential for their biological function. This Xenopus laevis (African clawed frog) protein is Cyclin-dependent kinases regulatory subunit 2 (cks2).